A 429-amino-acid chain; its full sequence is Ribosomal RNA small subunit methyltransferase B (429 aa).

S-adenosyl-L-methionine is bound by residues 254–260 (CAAPGGK), Asp-277, Asp-303, and Asp-322. Cys-375 acts as the Nucleophile in catalysis.

This sequence belongs to the class I-like SAM-binding methyltransferase superfamily. RsmB/NOP family.

The protein localises to the cytoplasm. It catalyses the reaction cytidine(967) in 16S rRNA + S-adenosyl-L-methionine = 5-methylcytidine(967) in 16S rRNA + S-adenosyl-L-homocysteine + H(+). Its function is as follows. Specifically methylates the cytosine at position 967 (m5C967) of 16S rRNA. This is Ribosomal RNA small subunit methyltransferase B from Shigella boydii serotype 18 (strain CDC 3083-94 / BS512).